A 171-amino-acid polypeptide reads, in one-letter code: Small ribosomal subunit protein uS5 (171 aa).

Positions 16–79 constitute an S5 DRBM domain; the sequence is LREKMISVNR…EEARRKLVKI (64 aa).

This sequence belongs to the universal ribosomal protein uS5 family. Part of the 30S ribosomal subunit. Contacts proteins S4 and S8.

Functionally, with S4 and S12 plays an important role in translational accuracy. In terms of biological role, located at the back of the 30S subunit body where it stabilizes the conformation of the head with respect to the body. In Thiobacillus denitrificans (strain ATCC 25259 / T1), this protein is Small ribosomal subunit protein uS5.